We begin with the raw amino-acid sequence, 352 residues long: Protein-glutamate methylesterase/protein-glutamine glutaminase 2 (352 aa).

The Response regulatory domain maps to 1–116 (MVVDDSAVVR…KQFLTDSADE (116 aa)). The residue at position 50 (aspartate 50) is a 4-aspartylphosphate. The CheB-type methylesterase domain occupies 162–352 (AQTTERIVAI…MAREIVTQLQ (191 aa)). Residues serine 174, histidine 200, and aspartate 296 contribute to the active site.

The protein belongs to the CheB family. In terms of processing, phosphorylated by CheA. Phosphorylation of the N-terminal regulatory domain activates the methylesterase activity.

It is found in the cytoplasm. The catalysed reaction is [protein]-L-glutamate 5-O-methyl ester + H2O = L-glutamyl-[protein] + methanol + H(+). The enzyme catalyses L-glutaminyl-[protein] + H2O = L-glutamyl-[protein] + NH4(+). Functionally, involved in chemotaxis. Part of a chemotaxis signal transduction system that modulates chemotaxis in response to various stimuli. Catalyzes the demethylation of specific methylglutamate residues introduced into the chemoreceptors (methyl-accepting chemotaxis proteins or MCP) by CheR. Also mediates the irreversible deamidation of specific glutamine residues to glutamic acid. The polypeptide is Protein-glutamate methylesterase/protein-glutamine glutaminase 2 (Xanthomonas campestris pv. campestris (strain ATCC 33913 / DSM 3586 / NCPPB 528 / LMG 568 / P 25)).